Here is a 521-residue protein sequence, read N- to C-terminus: Cytochrome P450 1A1 (521 aa).

Phe-229 contributes to the substrate binding site. Position 463 (Cys-463) interacts with heme.

This sequence belongs to the cytochrome P450 family. It depends on heme as a cofactor.

The protein resides in the endoplasmic reticulum membrane. It is found in the microsome membrane. It catalyses the reaction an organic molecule + reduced [NADPH--hemoprotein reductase] + O2 = an alcohol + oxidized [NADPH--hemoprotein reductase] + H2O + H(+). Its function is as follows. Cytochromes P450 are a group of heme-thiolate monooxygenases. They oxidize a variety of structurally unrelated compounds, including steroids, fatty acids, and xenobiotics. The sequence is that of Cytochrome P450 1A1 (cyp1a1) from Oryzias latipes (Japanese rice fish).